We begin with the raw amino-acid sequence, 94 residues long: Evasin P1086 (94 aa).

The N-terminal stretch at 1-28 is a signal peptide; the sequence is MAFNVITFLQLAVFVVILFNINLHSASA. 3 disulfides stabilise this stretch: Cys-48–Cys-67, Cys-52–Cys-69, and Cys-63–Cys-80. N-linked (GlcNAc...) asparagine glycosylation is present at Asn-74.

It localises to the secreted. Salivary chemokine-binding protein which binds to host chemokines CXCL1, CXCL2, CXCL3, CXCL5, CXCL6, CXCL10, CXCL12 and CXCL13. The chain is Evasin P1086 from Ixodes ricinus (Common tick).